The sequence spans 186 residues: Phosphoheptose isomerase 1 (186 aa).

The region spanning L33 to F186 is the SIS domain. N48–G50 serves as a coordination point for substrate. Zn(2+) is bound by residues H57 and E61. Substrate is bound by residues E61, N90 to D91, S116 to S118, S121, and Q168. Residues Q168 and H176 each coordinate Zn(2+).

The protein belongs to the SIS family. GmhA subfamily. In terms of assembly, homotetramer. Zn(2+) serves as cofactor.

Its subcellular location is the cytoplasm. The catalysed reaction is 2 D-sedoheptulose 7-phosphate = D-glycero-alpha-D-manno-heptose 7-phosphate + D-glycero-beta-D-manno-heptose 7-phosphate. The protein operates within carbohydrate biosynthesis; D-glycero-D-manno-heptose 7-phosphate biosynthesis; D-glycero-alpha-D-manno-heptose 7-phosphate and D-glycero-beta-D-manno-heptose 7-phosphate from sedoheptulose 7-phosphate: step 1/1. It functions in the pathway bacterial outer membrane biogenesis; LOS core biosynthesis. Its function is as follows. Catalyzes the isomerization of sedoheptulose 7-phosphate in D-glycero-D-manno-heptose 7-phosphate. The sequence is that of Phosphoheptose isomerase 1 (gmhA1) from Campylobacter jejuni subsp. jejuni serotype O:2 (strain ATCC 700819 / NCTC 11168).